The following is a 537-amino-acid chain: Putative cysteine ligase BshC (537 aa).

Residues 422 to 450 are a coiled coil; it reads IEKVEGMIEQQRRLYQDLLDEVAGNQNNI.

This sequence belongs to the BshC family.

Its function is as follows. Involved in bacillithiol (BSH) biosynthesis. May catalyze the last step of the pathway, the addition of cysteine to glucosamine malate (GlcN-Mal) to generate BSH. This is Putative cysteine ligase BshC from Staphylococcus aureus (strain MRSA252).